The primary structure comprises 597 residues: Gigaxonin (597 aa).

Residues C30–E99 form the BTB domain. Positions C134–L236 constitute a BACK domain. 6 Kelch repeats span residues C274–G326, F327–G374, L376–K421, K422–M468, L470–A522, and S528–R574.

Interacts with TBCB. Interacts with CUL3. Part of a complex that contains CUL3, RBX1 and GAN. Interacts (via BTB domain) with UBA1. Interacts (via Kelch domains) with MAP1B (via C-terminus) and MAP1S (via C-terminus). In terms of processing, ubiquitinated by E3 ubiquitin ligase complex formed by CUL3 and RBX1 and probably targeted for proteasome-independent degradation. Expressed in brain, heart and muscle (at protein level).

It localises to the cytoplasm. The protein localises to the cytoskeleton. It participates in protein modification; protein ubiquitination. Its function is as follows. Probable cytoskeletal component that directly or indirectly plays an important role in neurofilament architecture. May act as a substrate-specific adapter of an E3 ubiquitin-protein ligase complex which mediates the ubiquitination and subsequent proteasomal degradation of target proteins. Controls degradation of TBCB. Controls degradation of MAP1B and MAP1S, and is critical for neuronal maintenance and survival. This is Gigaxonin from Mus musculus (Mouse).